Here is a 673-residue protein sequence, read N- to C-terminus: Inactive polyglycylase TTLL10 (673 aa).

The segment at 1 to 132 is disordered; it reads MDHSCTRFIH…ADSDDTNAAG (132 aa). Basic residues predominate over residues 8 to 36; the sequence is FIHRRGPPTRTRAGFKRGKRPRIQQRPRA. A compositionally biased stretch (pro residues) spans 52–62; sequence ASQPGPCPAPG. A compositionally biased stretch (basic and acidic residues) spans 89 to 105; the sequence is PDHDADGHCGPDLEGAE. Residues 155–552 enclose the TTL domain; the sequence is PGPFFYIGGS…TFRKSLRGQK (398 aa). Residues 362–365, K375, and D377 contribute to the ATP site; that span reads QRYI. A disordered region spans residues 569 to 673; it reads EADPRPHLGG…EREEPENARP (105 aa). Over residues 612-627 the composition is skewed to pro residues; the sequence is PAPPPLVPQRPRPPGP. The span at 661 to 673 shows a compositional bias: basic and acidic residues; sequence AKEEREEPENARP.

Inactive polyglycylase. The sequence is that of Inactive polyglycylase TTLL10 from Homo sapiens (Human).